Consider the following 161-residue polypeptide: MDDKIKNYNNLPYRIGVGMVIINQKKEIFTGQRIDSARQYWQMPQGGIILGETYSKAVLREMKEEIGCNKAIIMAESRNWYSYHIPKFLVHKLWNSNFKGQKQKWFLIKFLGKDEDININTIYPEFSQWKWMNSNQLINNALPFKRKLYKAVINEFHIFLL.

The Nudix hydrolase domain maps to 12–154 (PYRIGVGMVI…KRKLYKAVIN (143 aa)). A Nudix box motif is present at residues 46–67 (GGIILGETYSKAVLREMKEEIG).

It belongs to the Nudix hydrolase family. RppH subfamily. A divalent metal cation is required as a cofactor.

Functionally, accelerates the degradation of transcripts by removing pyrophosphate from the 5'-end of triphosphorylated RNA, leading to a more labile monophosphorylated state that can stimulate subsequent ribonuclease cleavage. This Orientia tsutsugamushi (strain Boryong) (Rickettsia tsutsugamushi) protein is RNA pyrophosphohydrolase.